Consider the following 314-residue polypeptide: Olfactory receptor 8U9 (314 aa).

The Extracellular segment spans residues 1 to 25 (MAQINCTQVTEFILVGLTDREELKM). A glycan (N-linked (GlcNAc...) asparagine) is linked at Asn5. Residues 26 to 46 (PLFVVFLSIYLFTTLGNLGLI) form a helical membrane-spanning segment. Residues 47-54 (LVIRTDAR) are Cytoplasmic-facing. The chain crosses the membrane as a helical span at residues 55–75 (LHTPMYFFLSNLAFVDFCYSS). Residues 76-99 (VITPKMLGNFLYKQNMISFNACAA) lie on the Extracellular side of the membrane. A disulfide bridge connects residues Cys97 and Cys189. A helical transmembrane segment spans residues 100 to 120 (QLGCFLAFMTAECLLLASMAY). The Cytoplasmic portion of the chain corresponds to 121 to 133 (DRYVAICNPLLYM). The helical transmembrane segment at 134-154 (VLMSPGICFQLVAAPYSYSFL) threads the bilayer. Over 155–196 (VALFHAILTFRLCYCHSNAINHFYCDDMPLLRLTCSDTHSKQ) the chain is Extracellular. Residues 197–217 (LWIFVCAGIMFISSLLIVFIS) form a helical membrane-spanning segment. Topologically, residues 218-237 (YTFIISAILRMRSAEGRRKA) are cytoplasmic. Residues 238 to 258 (FSTCGSHMLAVTIFYGTLIFM) form a helical membrane-spanning segment. Residues 259–271 (YLQPSSNHSLDTD) lie on the Extracellular side of the membrane. An N-linked (GlcNAc...) asparagine glycan is attached at Asn265. Residues 272 to 292 (KMASVFYTVIIPMLNPLIYSL) form a helical membrane-spanning segment. Residues 293–314 (RNKEVKDALKKLIASKNQMLSS) are Cytoplasmic-facing.

It belongs to the G-protein coupled receptor 1 family.

The protein resides in the cell membrane. Functionally, potential odorant receptor. This Mus musculus (Mouse) protein is Olfactory receptor 8U9.